Reading from the N-terminus, the 174-residue chain is Keratin-associated protein 9-2 (174 aa).

17 tandem repeats follow at residues 8–12 (CCQPT), 13–17 (CCRTT), 18–22 (CCRTT), 37–41 (CCQPA), 42–46 (CCVSS), 51–55 (CCRPT), 61–65 (CCRTT), 66–70 (CCQPT), 75–79 (CCQPS), 80–84 (CCSTP), 85–89 (CCQPT), 90–94 (CCGSS), 95–99 (CCGQT), 144–148 (CCRPA), 149–153 (CCETT), 154–158 (CCRTT), and 168–172 (CCQPS). Residues 8–172 (CCQPTCCRTT…TCVSSCCQPS (165 aa)) form a 17 X 5 AA repeats of C-C-[RQVSGE]-[SPTQ]-[TASP] region.

This sequence belongs to the KRTAP type 9 family. As to quaternary structure, interacts with hair keratins.

Functionally, in the hair cortex, hair keratin intermediate filaments are embedded in an interfilamentous matrix, consisting of hair keratin-associated proteins (KRTAP), which are essential for the formation of a rigid and resistant hair shaft through their extensive disulfide bond cross-linking with abundant cysteine residues of hair keratins. The matrix proteins include the high-sulfur and high-glycine-tyrosine keratins. The sequence is that of Keratin-associated protein 9-2 (KRTAP9-2) from Homo sapiens (Human).